Here is a 242-residue protein sequence, read N- to C-terminus: ATP synthase subunit a (242 aa).

The next 6 helical transmembrane spans lie at 29–49 (SSIY…LAFY), 84–104 (FIPL…LGMT), 114–134 (IIVT…VGFV), 140–160 (FLTL…MIVI), 189–209 (VIAG…IPLM), and 210–230 (VILI…FTIL).

Belongs to the ATPase A chain family. F-type ATPases have 2 components, CF(1) - the catalytic core - and CF(0) - the membrane proton channel. CF(1) has five subunits: alpha(3), beta(3), gamma(1), delta(1), epsilon(1). CF(0) has three main subunits: a(1), b(2) and c(9-12). The alpha and beta chains form an alternating ring which encloses part of the gamma chain. CF(1) is attached to CF(0) by a central stalk formed by the gamma and epsilon chains, while a peripheral stalk is formed by the delta and b chains.

The protein localises to the cell inner membrane. Its function is as follows. Key component of the proton channel; it plays a direct role in the translocation of protons across the membrane. This chain is ATP synthase subunit a, found in Rickettsia felis (strain ATCC VR-1525 / URRWXCal2) (Rickettsia azadi).